Consider the following 652-residue polypeptide: Engulfment and cell motility protein 3 (652 aa).

The region spanning Glu-307–Leu-479 is the ELMO domain.

In terms of assembly, probably interacts directly with the SH3-domain of DOCK1 via its SH3-binding site. Part of a complex with DOCK1 and RAC1. Interacts with ADGRB3.

Its subcellular location is the cytoplasm. Functionally, involved in cytoskeletal rearrangements required for phagocytosis of apoptotic cells and cell motility. Acts in association with DOCK1 and CRK. Was initially proposed to be required in complex with DOCK1 to activate Rac Rho small GTPases. May enhance the guanine nucleotide exchange factor (GEF) activity of DOCK1. The chain is Engulfment and cell motility protein 3 (ELMO3) from Bos taurus (Bovine).